The primary structure comprises 211 residues: tRNA (guanine-N(7)-)-methyltransferase (211 aa).

4 residues coordinate S-adenosyl-L-methionine: Glu-44, Asp-69, Asp-96, and Asp-118. Asp-118 is a catalytic residue. Lys-122 serves as a coordination point for substrate. Residues 124–129 (RHEKRR) are interaction with RNA. Substrate contacts are provided by residues Asp-154 and 191 to 194 (TEYE).

It belongs to the class I-like SAM-binding methyltransferase superfamily. TrmB family.

It carries out the reaction guanosine(46) in tRNA + S-adenosyl-L-methionine = N(7)-methylguanosine(46) in tRNA + S-adenosyl-L-homocysteine. Its pathway is tRNA modification; N(7)-methylguanine-tRNA biosynthesis. Its function is as follows. Catalyzes the formation of N(7)-methylguanine at position 46 (m7G46) in tRNA. The sequence is that of tRNA (guanine-N(7)-)-methyltransferase from Streptococcus equi subsp. zooepidemicus (strain H70).